Here is a 160-residue protein sequence, read N- to C-terminus: SsrA-binding protein (160 aa).

It belongs to the SmpB family.

The protein resides in the cytoplasm. Functionally, required for rescue of stalled ribosomes mediated by trans-translation. Binds to transfer-messenger RNA (tmRNA), required for stable association of tmRNA with ribosomes. tmRNA and SmpB together mimic tRNA shape, replacing the anticodon stem-loop with SmpB. tmRNA is encoded by the ssrA gene; the 2 termini fold to resemble tRNA(Ala) and it encodes a 'tag peptide', a short internal open reading frame. During trans-translation Ala-aminoacylated tmRNA acts like a tRNA, entering the A-site of stalled ribosomes, displacing the stalled mRNA. The ribosome then switches to translate the ORF on the tmRNA; the nascent peptide is terminated with the 'tag peptide' encoded by the tmRNA and targeted for degradation. The ribosome is freed to recommence translation, which seems to be the essential function of trans-translation. This Salmonella arizonae (strain ATCC BAA-731 / CDC346-86 / RSK2980) protein is SsrA-binding protein.